The chain runs to 83 residues: Exodeoxyribonuclease 7 small subunit (83 aa).

This sequence belongs to the XseB family. Heterooligomer composed of large and small subunits.

Its subcellular location is the cytoplasm. The catalysed reaction is Exonucleolytic cleavage in either 5'- to 3'- or 3'- to 5'-direction to yield nucleoside 5'-phosphates.. Its function is as follows. Bidirectionally degrades single-stranded DNA into large acid-insoluble oligonucleotides, which are then degraded further into small acid-soluble oligonucleotides. The polypeptide is Exodeoxyribonuclease 7 small subunit (Bradyrhizobium sp. (strain ORS 278)).